The sequence spans 491 residues: MKERKVIIKTGLNLENSYTSLPEIFFTRQSPSRVPSPKLAVLNYPLITSLGLNAQVLQSADGVDILAGNKIPEEAIPIAQAYAGHQFAHFTMLGDGRALLLGEHITPLGDRFDIQLKGSGKTPYSRGGDGKAALGPMLREYIISEAMNALGIPTTRSLAVVTTGELIMREAELPGAILTRVAASHIRVGTFEYVSRWGTVEELRALADYTLQRHFKKGYDKENPYLFLLQEVIKKQAELIAKWQLVGFVHGVMNTDNMTISGETIDYGPCAFMDVYNPKTVFSSIDIYGRYAYGNQPNIAAWNLARLAETLLPLLNINPNEAIKIAENAVSDFTKLYKNNWLSGMRAKLGIFNEEFQDEYLIEDLLSIMHKYGADYTNTFRALTFDNIEDTVLFDKMEFDKWYKLWQERLTRQEESKLSSKQLMKSSNPSVIPRNHRVEEALEAAVKEGDYSVMEKLLEALSKPYAYSKEQDYYSKLPEPSTCPYQTYCGT.

8 residues coordinate ATP: G94, G96, R97, K117, D129, G130, R180, and R187. D256 functions as the Proton acceptor in the catalytic mechanism. N257 and D266 together coordinate Mg(2+). D266 contacts ATP.

It belongs to the SELO family. Mg(2+) serves as cofactor. Mn(2+) is required as a cofactor.

It catalyses the reaction L-seryl-[protein] + ATP = 3-O-(5'-adenylyl)-L-seryl-[protein] + diphosphate. The enzyme catalyses L-threonyl-[protein] + ATP = 3-O-(5'-adenylyl)-L-threonyl-[protein] + diphosphate. It carries out the reaction L-tyrosyl-[protein] + ATP = O-(5'-adenylyl)-L-tyrosyl-[protein] + diphosphate. The catalysed reaction is L-histidyl-[protein] + UTP = N(tele)-(5'-uridylyl)-L-histidyl-[protein] + diphosphate. It catalyses the reaction L-seryl-[protein] + UTP = O-(5'-uridylyl)-L-seryl-[protein] + diphosphate. The enzyme catalyses L-tyrosyl-[protein] + UTP = O-(5'-uridylyl)-L-tyrosyl-[protein] + diphosphate. Its function is as follows. Nucleotidyltransferase involved in the post-translational modification of proteins. It can catalyze the addition of adenosine monophosphate (AMP) or uridine monophosphate (UMP) to a protein, resulting in modifications known as AMPylation and UMPylation. The polypeptide is Protein nucleotidyltransferase YdiU (Clostridium botulinum (strain 657 / Type Ba4)).